The following is an 85-amino-acid chain: Thioredoxin (85 aa).

The 85-residue stretch at 1 to 85 (MSKVKIELFT…ALVEAIKKRL (85 aa)) folds into the Glutaredoxin domain. C14 and C17 are disulfide-bonded.

Belongs to the glutaredoxin family.

It is found in the cytoplasm. In terms of biological role, acts to maintain redox homeostasis; functions as a protein disulfide reductase. The polypeptide is Thioredoxin (trx) (Methanocaldococcus jannaschii (strain ATCC 43067 / DSM 2661 / JAL-1 / JCM 10045 / NBRC 100440) (Methanococcus jannaschii)).